A 212-amino-acid polypeptide reads, in one-letter code: ATP phosphoribosyltransferase (212 aa).

This sequence belongs to the ATP phosphoribosyltransferase family. Short subfamily. Heteromultimer composed of HisG and HisZ subunits.

It localises to the cytoplasm. It catalyses the reaction 1-(5-phospho-beta-D-ribosyl)-ATP + diphosphate = 5-phospho-alpha-D-ribose 1-diphosphate + ATP. It participates in amino-acid biosynthesis; L-histidine biosynthesis; L-histidine from 5-phospho-alpha-D-ribose 1-diphosphate: step 1/9. Catalyzes the condensation of ATP and 5-phosphoribose 1-diphosphate to form N'-(5'-phosphoribosyl)-ATP (PR-ATP). Has a crucial role in the pathway because the rate of histidine biosynthesis seems to be controlled primarily by regulation of HisG enzymatic activity. This is ATP phosphoribosyltransferase from Clostridium botulinum (strain Langeland / NCTC 10281 / Type F).